Consider the following 908-residue polypeptide: NADH-quinone oxidoreductase subunit G (908 aa).

In terms of domain architecture, 2Fe-2S ferredoxin-type spans 2 to 83; the sequence is ATIHVDGKEY…GTFISIDDEE (82 aa). The [2Fe-2S] cluster site is built by Cys34, Cys45, Cys48, and Cys67. Positions 83–122 constitute a 4Fe-4S His(Cys)3-ligated-type domain; it reads EAKQFRESVVEWLMTNHPHDCPVCEEGGNCHLQDMTVMTG. The [4Fe-4S] cluster site is built by His99, Cys103, Cys106, Cys112, Cys151, Cys154, Cys157, Cys201, Cys228, Cys231, Cys235, and Cys263. The 57-residue stretch at 221–277 folds into the 4Fe-4S Mo/W bis-MGD-type domain; it reads MQFAPSICQQCSIGCNISPGERYGELRRIENRYNGTVNHYFLCDRGRFGYGYVNLKD.

Belongs to the complex I 75 kDa subunit family. In terms of assembly, composed of 13 different subunits. Subunits NuoCD, E, F, and G constitute the peripheral sector of the complex. It depends on [2Fe-2S] cluster as a cofactor. [4Fe-4S] cluster is required as a cofactor.

It catalyses the reaction a quinone + NADH + 5 H(+)(in) = a quinol + NAD(+) + 4 H(+)(out). In terms of biological role, NDH-1 shuttles electrons from NADH, via FMN and iron-sulfur (Fe-S) centers, to quinones in the respiratory chain. The immediate electron acceptor for the enzyme in this species is believed to be ubiquinone. Couples the redox reaction to proton translocation (for every two electrons transferred, four hydrogen ions are translocated across the cytoplasmic membrane), and thus conserves the redox energy in a proton gradient. The sequence is that of NADH-quinone oxidoreductase subunit G (nuoG) from Escherichia coli O157:H7.